We begin with the raw amino-acid sequence, 206 residues long: Ribosomal RNA small subunit methyltransferase G (206 aa).

Residues glycine 73, leucine 78, 124–125 (VE), and arginine 139 each bind S-adenosyl-L-methionine.

Belongs to the methyltransferase superfamily. RNA methyltransferase RsmG family.

It is found in the cytoplasm. The catalysed reaction is guanosine(527) in 16S rRNA + S-adenosyl-L-methionine = N(7)-methylguanosine(527) in 16S rRNA + S-adenosyl-L-homocysteine. Functionally, specifically methylates the N7 position of guanine in position 527 of 16S rRNA. This Edwardsiella ictaluri (strain 93-146) protein is Ribosomal RNA small subunit methyltransferase G.